A 68-amino-acid chain; its full sequence is UPF0435 protein SAOUHSC_02093 (68 aa).

The protein belongs to the UPF0435 family.

The sequence is that of UPF0435 protein SAOUHSC_02093 from Staphylococcus aureus (strain NCTC 8325 / PS 47).